Here is a 400-residue protein sequence, read N- to C-terminus: Probable peptidoglycan glycosyltransferase FtsW (400 aa).

The next 11 helical transmembrane spans lie at 30–50 (LSVLALLGLGLVMVASASIGI), 65–84 (QAAYVVLGLAAASLAYRIRL), 92–112 (GLLLGFAYFLLILVLVPGVGV), 123–143 (LGLFNLQVSEVAKLLFTLYLA), 157–177 (FAGFLRPMLLLSGAALLLLME), 179–199 (DFGAAVVLMAIGLALLFLAGA), 201–221 (LWQFALLVGTVAAALAMLAIT), 247–267 (TQSLIAIGSGSWFGVGLGASV), 280–300 (FLFAVLAEELGLVGITVVVLL), 321–341 (LFGAYLAYGVGVWVSLQAFIN), and 356–376 (LPLMSYGGSSMLMTCAAVGLL).

Belongs to the SEDS family. FtsW subfamily.

It is found in the cell inner membrane. It catalyses the reaction [GlcNAc-(1-&gt;4)-Mur2Ac(oyl-L-Ala-gamma-D-Glu-L-Lys-D-Ala-D-Ala)](n)-di-trans,octa-cis-undecaprenyl diphosphate + beta-D-GlcNAc-(1-&gt;4)-Mur2Ac(oyl-L-Ala-gamma-D-Glu-L-Lys-D-Ala-D-Ala)-di-trans,octa-cis-undecaprenyl diphosphate = [GlcNAc-(1-&gt;4)-Mur2Ac(oyl-L-Ala-gamma-D-Glu-L-Lys-D-Ala-D-Ala)](n+1)-di-trans,octa-cis-undecaprenyl diphosphate + di-trans,octa-cis-undecaprenyl diphosphate + H(+). Its pathway is cell wall biogenesis; peptidoglycan biosynthesis. Peptidoglycan polymerase that is essential for cell division. The polypeptide is Probable peptidoglycan glycosyltransferase FtsW (Thioalkalivibrio sulfidiphilus (strain HL-EbGR7)).